We begin with the raw amino-acid sequence, 69 residues long: MSVLTPLLLRGLTGSARRLPVPRAKIHSLPPEEKLGIMELAVGLTSCFVTFLLPAGWILSHLETYRRPE.

Residues 1–25 constitute a mitochondrion transit peptide; it reads MSVLTPLLLRGLTGSARRLPVPRAK. The short motif at 2–19 is the SIFI-degron element; it reads SVLTPLLLRGLTGSARRL. Residues 26–36 are Mitochondrial matrix-facing; that stretch reads IHSLPPEEKLG. The chain crosses the membrane as a helical span at residues 37 to 60; sequence IMELAVGLTSCFVTFLLPAGWILS. Topologically, residues 61–69 are mitochondrial intermembrane; the sequence is HLETYRRPE.

This sequence belongs to the cytochrome c oxidase VIII family. In terms of assembly, component of the cytochrome c oxidase (complex IV, CIV), a multisubunit enzyme composed of 14 subunits. The complex is composed of a catalytic core of 3 subunits MT-CO1, MT-CO2 and MT-CO3, encoded in the mitochondrial DNA, and 11 supernumerary subunits COX4I, COX5A, COX5B, COX6A, COX6B, COX6C, COX7A, COX7B, COX7C, COX8 and NDUFA4, which are encoded in the nuclear genome. The complex exists as a monomer or a dimer and forms supercomplexes (SCs) in the inner mitochondrial membrane with NADH-ubiquinone oxidoreductase (complex I, CI) and ubiquinol-cytochrome c oxidoreductase (cytochrome b-c1 complex, complex III, CIII), resulting in different assemblies (supercomplex SCI(1)III(2)IV(1) and megacomplex MCI(2)III(2)IV(2)). In terms of processing, in response to mitochondrial stress, the precursor protein is ubiquitinated by the SIFI complex in the cytoplasm before mitochondrial import, leading to its degradation. Within the SIFI complex, UBR4 initiates ubiquitin chain that are further elongated or branched by KCMF1.

The protein localises to the mitochondrion inner membrane. It participates in energy metabolism; oxidative phosphorylation. Component of the cytochrome c oxidase, the last enzyme in the mitochondrial electron transport chain which drives oxidative phosphorylation. The respiratory chain contains 3 multisubunit complexes succinate dehydrogenase (complex II, CII), ubiquinol-cytochrome c oxidoreductase (cytochrome b-c1 complex, complex III, CIII) and cytochrome c oxidase (complex IV, CIV), that cooperate to transfer electrons derived from NADH and succinate to molecular oxygen, creating an electrochemical gradient over the inner membrane that drives transmembrane transport and the ATP synthase. Cytochrome c oxidase is the component of the respiratory chain that catalyzes the reduction of oxygen to water. Electrons originating from reduced cytochrome c in the intermembrane space (IMS) are transferred via the dinuclear copper A center (CU(A)) of subunit 2 and heme A of subunit 1 to the active site in subunit 1, a binuclear center (BNC) formed by heme A3 and copper B (CU(B)). The BNC reduces molecular oxygen to 2 water molecules using 4 electrons from cytochrome c in the IMS and 4 protons from the mitochondrial matrix. The polypeptide is Cytochrome c oxidase subunit 8A, mitochondrial (COX8A) (Hylobates agilis (Agile gibbon)).